The chain runs to 251 residues: Phosphate import ATP-binding protein PstB 2 (251 aa).

An ABC transporter domain is found at phenylalanine 6–valine 246. An ATP-binding site is contributed by glycine 38–serine 45.

It belongs to the ABC transporter superfamily. Phosphate importer (TC 3.A.1.7) family. The complex is composed of two ATP-binding proteins (PstB), two transmembrane proteins (PstC and PstA) and a solute-binding protein (PstS).

It localises to the cell inner membrane. It catalyses the reaction phosphate(out) + ATP + H2O = ADP + 2 phosphate(in) + H(+). Functionally, part of the ABC transporter complex PstSACB involved in phosphate import. Responsible for energy coupling to the transport system. This Vibrio cholerae serotype O1 (strain ATCC 39315 / El Tor Inaba N16961) protein is Phosphate import ATP-binding protein PstB 2.